The sequence spans 304 residues: Glutaminase (304 aa).

Positions 63, 113, 157, 164, 188, 240, and 258 each coordinate substrate.

The protein belongs to the glutaminase family. As to quaternary structure, homotetramer.

The enzyme catalyses L-glutamine + H2O = L-glutamate + NH4(+). This Christiangramia forsetii (strain DSM 17595 / CGMCC 1.15422 / KT0803) (Gramella forsetii) protein is Glutaminase.